The following is a 208-amino-acid chain: Protein-L-isoaspartate O-methyltransferase (208 aa).

Ser59 is an active-site residue.

The protein belongs to the methyltransferase superfamily. L-isoaspartyl/D-aspartyl protein methyltransferase family.

It is found in the cytoplasm. It carries out the reaction [protein]-L-isoaspartate + S-adenosyl-L-methionine = [protein]-L-isoaspartate alpha-methyl ester + S-adenosyl-L-homocysteine. Its function is as follows. Catalyzes the methyl esterification of L-isoaspartyl residues in peptides and proteins that result from spontaneous decomposition of normal L-aspartyl and L-asparaginyl residues. It plays a role in the repair and/or degradation of damaged proteins. This Vibrio parahaemolyticus serotype O3:K6 (strain RIMD 2210633) protein is Protein-L-isoaspartate O-methyltransferase.